Here is a 175-residue protein sequence, read N- to C-terminus: MAAGAAAALAFLNQESRARAGGVGGLRVPAPVTMDSFFFGCELSGHTRSFTFKVEEEDDTEHVLALNMLCLTEGATDECNVVEVVARDHDNQEIAVPVANLRLSCQPMLSVDDFQLQPPVTFRLKSGSGPVRITGRHQIVCINNDLSEEESDDESEEDEIKLCGILPAKKHRGRP.

Ala-2 bears the N-acetylalanine mark. Ser-16 bears the Phosphoserine mark. At Arg-27 the chain carries Omega-N-methylarginine. Ser-147 and Ser-151 each carry phosphoserine.

This sequence belongs to the nucleoplasmin family. Interacts with NPM (via N-terminus). Forms a pentamer with NPM at a ratio 4:1 (NPM3/NPM). Two pentamers form a decamer. Post-translationally, phosphorylated. In terms of tissue distribution, predominantly expressed in testis.

The protein localises to the nucleus. It is found in the nucleolus. Functionally, plays a role in the regulation of diverse cellular processes such as ribosome biogenesis, chromatin remodeling or protein chaperoning. Modulates the histone chaperone function and the RNA-binding activity of nucleolar phosphoprotein B23/NPM. Efficiently mediates chromatin remodeling when included in a pentamer containing NPM3 and NPM. The polypeptide is Nucleoplasmin-3 (Npm3) (Mus musculus (Mouse)).